A 558-amino-acid chain; its full sequence is Large cysteine-rich periplasmic protein OmcB (558 aa).

Positions 1–24 (MSKLIRRVVTVLALTSMASSFASG) are cleaved as a signal peptide. A propeptide spanning residues 25 to 40 (KTEVAAAESLVTRFIA) is cleaved from the precursor.

In terms of assembly, part of a disulfide cross-linked outer membrane complex (COMC) composed of the major outer membrane porin (MOMP), the small cysteine-rich protein (OmcA) and the large cysteine-rich periplasmic protein (OmcB).

The protein localises to the periplasm. In elementary bodies (EBs, the infectious stage, which is able to survive outside the host cell) provides the structural integrity of the outer envelope through disulfide cross-links with the small cysteine-rich protein and the major outer membrane porin. It has been described in publications as the Sarkosyl-insoluble COMC (Chlamydia outer membrane complex), and serves as the functional equivalent of peptidoglycan. It is present but the disulfide bonds are reduced in reticulate bodies (RBs). The polypeptide is Large cysteine-rich periplasmic protein OmcB (omcB) (Chlamydia felis (strain Fe/C-56) (Chlamydophila felis)).